Consider the following 237-residue polypeptide: Mitochondrial inner membrane protease atp23 (237 aa).

Position 136 (His-136) interacts with a divalent metal cation. Residue Glu-137 is part of the active site. A divalent metal cation is bound at residue His-140.

It belongs to the peptidase M76 family.

It is found in the mitochondrion inner membrane. Has a dual role in the assembly of mitochondrial ATPase. Acts as a protease that removes N-terminal residues of mitochondrial ATPase CF(0) subunit 6 at the intermembrane space side. Also involved in the correct assembly of the membrane-embedded ATPase CF(0) particle, probably mediating association of subunit 6 with the subunit 9 ring. This is Mitochondrial inner membrane protease atp23 (atp23) from Aspergillus clavatus (strain ATCC 1007 / CBS 513.65 / DSM 816 / NCTC 3887 / NRRL 1 / QM 1276 / 107).